We begin with the raw amino-acid sequence, 759 residues long: Subtilisin-like serine-protease S (759 aa).

The first 22 residues, 1 to 22, serve as a signal peptide directing secretion; the sequence is MGSAKILSFTLLLFVGYTLVHG. Residues 28–105 form the Inhibitor I9 domain; that stretch reads YIVYMGDRSH…SVFESKMNKL (78 aa). The region spanning 110–613 is the Peptidase S8 domain; the sequence is SWDFLGLDTV…SGHVNPVASL (504 aa). The active-site Charge relay system is the D139. N170 is a glycosylation site (N-linked (GlcNAc...) asparagine). H215 serves as the catalytic Charge relay system. N-linked (GlcNAc...) asparagine glycans are attached at residues N230 and N388. Residues 390–462 enclose the PA domain; it reads SFCKEHTLDP…MIGQDAVEEL (73 aa). The active-site Charge relay system is S545. N593, N642, and N671 each carry an N-linked (GlcNAc...) asparagine glycan.

This sequence belongs to the peptidase S8 family.

The protein localises to the secreted. It is found in the extracellular space. Its subcellular location is the apoplast. Functionally, required for arbuscular mycorrhiza (AM) development during AM symbiosis with AM fungi (e.g. Glomeromycota intraradices). The sequence is that of Subtilisin-like serine-protease S from Lotus japonicus (Lotus corniculatus var. japonicus).